A 427-amino-acid polypeptide reads, in one-letter code: MKLETKAQGLRGSLRIPGDKSISHRSIMFGSLAKGVTTVRDILRGEDVLSTMQVFRDLGVTIEDDGDVVRIHGVGFDGLKAPQNKLDMGNSGTSIRLISGVLAGQDFDVEMFGDDSLSKRPMDRVTIPLRQMGVEVSGQTDRDLPPLKMHGSKSLKPIHYELPVASAQVKSALIFAALQADGESVIIEKEKTRNHTEDMIQQFGGQLQVEGKEIRISGGQTFTAQEVVVPGDISSAAFWLVAGLVVPNSKIVLKNVGINETRTGVIDVIKDMGGKIKLSDIDQVAKSATITVETSELKGTEIGGDIIPRLIDELPIITLLATQAQGKTVIRDAEELKVKETDRIQVVADALNAMGADIVPTEDGMIITGKTPLHGAEVNTFGDHRIGMMTAIAALLVQDGEVDLQRAEAINTSYPSFFSDLEGLLHG.

The 3-phosphoshikimate site is built by Lys20, Ser21, and Arg25. Residue Lys20 participates in phosphoenolpyruvate binding. Gly92 and Arg120 together coordinate phosphoenolpyruvate. 3-phosphoshikimate is bound by residues Ser166, Gln168, Asp312, and Lys339. Gln168 provides a ligand contact to phosphoenolpyruvate. Asp312 serves as the catalytic Proton acceptor. Phosphoenolpyruvate-binding residues include Arg343 and Arg385.

This sequence belongs to the EPSP synthase family. As to quaternary structure, monomer.

It localises to the cytoplasm. It carries out the reaction 3-phosphoshikimate + phosphoenolpyruvate = 5-O-(1-carboxyvinyl)-3-phosphoshikimate + phosphate. It functions in the pathway metabolic intermediate biosynthesis; chorismate biosynthesis; chorismate from D-erythrose 4-phosphate and phosphoenolpyruvate: step 6/7. Catalyzes the transfer of the enolpyruvyl moiety of phosphoenolpyruvate (PEP) to the 5-hydroxyl of shikimate-3-phosphate (S3P) to produce enolpyruvyl shikimate-3-phosphate and inorganic phosphate. In Streptococcus thermophilus (strain ATCC BAA-250 / LMG 18311), this protein is 3-phosphoshikimate 1-carboxyvinyltransferase.